A 92-amino-acid polypeptide reads, in one-letter code: Small ribosomal subunit protein uS19 (92 aa).

Belongs to the universal ribosomal protein uS19 family.

Functionally, protein S19 forms a complex with S13 that binds strongly to the 16S ribosomal RNA. The polypeptide is Small ribosomal subunit protein uS19 (Caulobacter vibrioides (strain ATCC 19089 / CIP 103742 / CB 15) (Caulobacter crescentus)).